Consider the following 170-residue polypeptide: Adenine phosphoribosyltransferase (170 aa).

Belongs to the purine/pyrimidine phosphoribosyltransferase family. Homodimer.

It is found in the cytoplasm. It carries out the reaction AMP + diphosphate = 5-phospho-alpha-D-ribose 1-diphosphate + adenine. It participates in purine metabolism; AMP biosynthesis via salvage pathway; AMP from adenine: step 1/1. Functionally, catalyzes a salvage reaction resulting in the formation of AMP, that is energically less costly than de novo synthesis. The protein is Adenine phosphoribosyltransferase of Prochlorococcus marinus (strain AS9601).